The primary structure comprises 615 residues: Dihydroxy-acid dehydratase (615 aa).

Residue D81 participates in Mg(2+) binding. C122 lines the [2Fe-2S] cluster pocket. 2 residues coordinate Mg(2+): D123 and K124. At K124 the chain carries N6-carboxylysine. Position 195 (C195) interacts with [2Fe-2S] cluster. Mg(2+) is bound at residue E491. Residue S517 is the Proton acceptor of the active site.

Belongs to the IlvD/Edd family. As to quaternary structure, homodimer. The cofactor is [2Fe-2S] cluster. Requires Mg(2+) as cofactor.

The catalysed reaction is (2R)-2,3-dihydroxy-3-methylbutanoate = 3-methyl-2-oxobutanoate + H2O. It carries out the reaction (2R,3R)-2,3-dihydroxy-3-methylpentanoate = (S)-3-methyl-2-oxopentanoate + H2O. It participates in amino-acid biosynthesis; L-isoleucine biosynthesis; L-isoleucine from 2-oxobutanoate: step 3/4. Its pathway is amino-acid biosynthesis; L-valine biosynthesis; L-valine from pyruvate: step 3/4. Functions in the biosynthesis of branched-chain amino acids. Catalyzes the dehydration of (2R,3R)-2,3-dihydroxy-3-methylpentanoate (2,3-dihydroxy-3-methylvalerate) into 2-oxo-3-methylpentanoate (2-oxo-3-methylvalerate) and of (2R)-2,3-dihydroxy-3-methylbutanoate (2,3-dihydroxyisovalerate) into 2-oxo-3-methylbutanoate (2-oxoisovalerate), the penultimate precursor to L-isoleucine and L-valine, respectively. This chain is Dihydroxy-acid dehydratase, found in Shewanella piezotolerans (strain WP3 / JCM 13877).